The following is a 423-amino-acid chain: Glucose-1-phosphate adenylyltransferase (423 aa).

Residues Y112, G177, 192 to 193 (EK), and S210 each bind alpha-D-glucose 1-phosphate.

Belongs to the bacterial/plant glucose-1-phosphate adenylyltransferase family. Homotetramer.

It catalyses the reaction alpha-D-glucose 1-phosphate + ATP + H(+) = ADP-alpha-D-glucose + diphosphate. It functions in the pathway glycan biosynthesis; glycogen biosynthesis. Involved in the biosynthesis of ADP-glucose, a building block required for the elongation reactions to produce glycogen. Catalyzes the reaction between ATP and alpha-D-glucose 1-phosphate (G1P) to produce pyrophosphate and ADP-Glc. This chain is Glucose-1-phosphate adenylyltransferase, found in Rhodospirillum rubrum (strain ATCC 11170 / ATH 1.1.1 / DSM 467 / LMG 4362 / NCIMB 8255 / S1).